A 346-amino-acid polypeptide reads, in one-letter code: UPF0053 protein sll1254 (346 aa).

The next 4 helical transmembrane spans lie at 1–21, 58–78, 87–107, and 121–141; these read MLEIVAAIFIVLLGSGICSCA, IGTIVVLNNIFNIVGSITIGA, AWMGVFSGILTLLIIVFGEII, and LLIAIPVRFLTLIFTPLVWLI. The region spanning 1-179 is the CNNM transmembrane domain; that stretch reads MLEIVAAIFI…YKEGVIEGDE (179 aa). 2 CBS domains span residues 198-259 and 263-320; these read MTPR…GYKT and LARP…IVDE.

The protein belongs to the UPF0053 family.

It localises to the cell membrane. The polypeptide is UPF0053 protein sll1254 (Synechocystis sp. (strain ATCC 27184 / PCC 6803 / Kazusa)).